We begin with the raw amino-acid sequence, 253 residues long: Phosphoribosylaminoimidazole-succinocarboxamide synthase (253 aa).

The protein belongs to the SAICAR synthetase family.

It carries out the reaction 5-amino-1-(5-phospho-D-ribosyl)imidazole-4-carboxylate + L-aspartate + ATP = (2S)-2-[5-amino-1-(5-phospho-beta-D-ribosyl)imidazole-4-carboxamido]succinate + ADP + phosphate + 2 H(+). It functions in the pathway purine metabolism; IMP biosynthesis via de novo pathway; 5-amino-1-(5-phospho-D-ribosyl)imidazole-4-carboxamide from 5-amino-1-(5-phospho-D-ribosyl)imidazole-4-carboxylate: step 1/2. The chain is Phosphoribosylaminoimidazole-succinocarboxamide synthase from Dinoroseobacter shibae (strain DSM 16493 / NCIMB 14021 / DFL 12).